Here is a 726-residue protein sequence, read N- to C-terminus: Methionine--tRNA ligase (726 aa).

The 'HIGH' region motif lies at 12–22 (PYVNNIPHLGN). The Zn(2+) site is built by cysteine 143, cysteine 146, cysteine 155, and cysteine 158. The short motif at 330-334 (KFSKS) is the 'KMSKS' region element. Lysine 333 contributes to the ATP binding site. One can recognise a tRNA-binding domain in the interval 562–667 (FSEQICLKTV…DNPIPGERVI (106 aa)).

The protein belongs to the class-I aminoacyl-tRNA synthetase family. MetG type 1 subfamily. In terms of assembly, homodimer. The cofactor is Zn(2+).

The protein resides in the cytoplasm. It catalyses the reaction tRNA(Met) + L-methionine + ATP = L-methionyl-tRNA(Met) + AMP + diphosphate. Is required not only for elongation of protein synthesis but also for the initiation of all mRNA translation through initiator tRNA(fMet) aminoacylation. The polypeptide is Methionine--tRNA ligase (Borrelia recurrentis (strain A1)).